The following is a 275-amino-acid chain: Large ribosomal subunit protein uL2 (275 aa).

2 disordered regions span residues 1 to 20 (MAVK…TTAD) and 214 to 275 (WLGR…TRRK). The span at 255–275 (KGLKTRRKRKTSDRFIVTRRK) shows a compositional bias: basic residues.

This sequence belongs to the universal ribosomal protein uL2 family. In terms of assembly, part of the 50S ribosomal subunit. Forms a bridge to the 30S subunit in the 70S ribosome.

In terms of biological role, one of the primary rRNA binding proteins. Required for association of the 30S and 50S subunits to form the 70S ribosome, for tRNA binding and peptide bond formation. It has been suggested to have peptidyltransferase activity; this is somewhat controversial. Makes several contacts with the 16S rRNA in the 70S ribosome. The sequence is that of Large ribosomal subunit protein uL2 (rplB) from Deinococcus radiodurans (strain ATCC 13939 / DSM 20539 / JCM 16871 / CCUG 27074 / LMG 4051 / NBRC 15346 / NCIMB 9279 / VKM B-1422 / R1).